The following is a 1213-amino-acid chain: Oligopeptidase PhomG' (1213 aa).

Residue histidine 447 participates in Zn(2+) binding. The active site involves glutamate 448. 2 residues coordinate Zn(2+): histidine 451 and histidine 454.

The protein belongs to the peptidase M3 family. Monomer. Zn(2+) serves as cofactor.

Its pathway is mycotoxin biosynthesis. Oligopeptidase; part of the gene cluster that mediates the biosynthesis of the phomopsins, a group of hexapeptide mycotoxins which infects lupins and causes lupinosis disease in livestock. Within the pathway, phomG and phomG' are probably involved in the processing of the phomA and phomA' precursors. The pathway starts with the processing of the precursor phomA by several endopeptidases including kexin proteases as well as the cluster-specific S41 family peptidase phomP1 and the oligopeptidase phomG to produce 10 identical copies of the hexapeptide Tyr-Val-Ile-Pro-Ile-Asp. After being excised from the precursor peptide, the core peptides are cyclized and modified post-translationally by enzymes encoded within the gene cluster. The timing and order of proteolysis of the phomA precursor and PTMs are still unknown. Two tyrosinase-like enzymes, phomQ1 and phomQ2, catalyze the chlorination and hydroxylation of Tyr, respectively. PhomYb, is proposed to be involved in the construction of the macrocyclic structure. The other 4 ustYa family proteins may be involved in PTMs that generate the unique structure of phomopsin A. PhomYa is required for the hydroxylation of C-beta of Tyr. PhomYc, phomYd, and phomYe are responsible for the biosynthesis of 2,3-dehydroisoleucine (dIle), 2,3-dehydroaspartic acid (dAsp), and 3,4-dehydroproline (dPro), respectively. While dIle formation by phomYc is indispensable for the installation of dAsp by phomYd, the order of the other PTMs have not been elucidated yet. Most of the biosynthetic enzymes likely have broad substrate specificity, and thus, there might be a metabolic grid from a precursor to phomopsin A. The enzyme(s) responsible for the biosynthesis of 3,4-dehydrovaline (dVal) have also not been identified yet. Finally, phomM acts as an S-adenosylmethionine-dependent alpha-N-methyltransferase that catalyzes two successive N-methylation reactions, converting N-desmethyl-phomopsin A to phomopsin A and phomopsin A further to an N,N-dimethylated congener called phomopsin E. The polypeptide is Oligopeptidase PhomG' (Diaporthe leptostromiformis (Lupinosis disease fungus)).